The sequence spans 182 residues: Plasmolipin (182 aa).

A disordered region spans residues 1 to 20 (MAEFPSKVSTRTSSPAQGVG). At 1 to 35 (MAEFPSKVSTRTSSPAQGVGASVSAMRPDLGFVRS) the chain is on the cytoplasmic side. Polar residues predominate over residues 7-16 (KVSTRTSSPA). The residue at position 9 (serine 9) is a Phosphoserine. Residues 32–166 (FVRSALGVLA…SAFFSFQAWR (135 aa)) enclose the MARVEL domain. The helical transmembrane segment at 36–56 (ALGVLALLQLVLGLLVWALIA) threads the bilayer. The Extracellular portion of the chain corresponds to 57–68 (DTPYHLYPAYGW). A helical membrane pass occupies residues 69–89 (VMFVAVFLWLVTIVFFIIYLF). Over 90–99 (QLHMKLYMVP) the chain is Cytoplasmic. Residues 100–120 (WPLVLLVFFVAATVLYITAFV) form a helical membrane-spanning segment. The Extracellular segment spans residues 121-141 (ACAAAVDLTSLRGSRPYNQRS). Residues 142–162 (AASFFACLVMIAYGLSAFFSF) traverse the membrane as a helical segment. Residues 163–182 (QAWRGVGSNAATSQMAGGYS) are Cytoplasmic-facing.

Belongs to the MAL family. In terms of assembly, forms oligomers. In terms of processing, phosphorylated. In terms of tissue distribution, detected to the sciatic nerve, brain and kidney. In the sciatic nerve, found in Schwann cells; in the brain, in developing oligodendrocytes, especially of the corpus callosum, of cortical white matter, in the optic nerve and in the stratum radiatum and stratum oriens of the hippocampus. In kidney, segregated to the apical surface of renal tubular epithelia.

The protein localises to the cell membrane. The protein resides in the myelin membrane. Its subcellular location is the apical cell membrane. In terms of biological role, main component of the myelin sheath that plays an important role in myelin membrane biogenesis and myelination. Plays an essential function in apical endocytosis. Regulates epithelial development through the regulation of apical endocytosis. Part of the intracellular machinery that mediates basolateral-to-apical transport of ICAM-1, an essential adhesion receptor in epithelial cells, from the subapical compartment in hepatic epithelial cells. In Rattus norvegicus (Rat), this protein is Plasmolipin (Pllp).